Here is a 343-residue protein sequence, read N- to C-terminus: Heat-inducible transcription repressor HrcA (343 aa).

The protein belongs to the HrcA family.

Its function is as follows. Negative regulator of class I heat shock genes (grpE-dnaK-dnaJ and groELS operons). Prevents heat-shock induction of these operons. The polypeptide is Heat-inducible transcription repressor HrcA (Clostridium botulinum (strain Eklund 17B / Type B)).